Consider the following 348-residue polypeptide: MTVMQHTLKIRRPDDWHLHLRDDAMLHSVLPYTSRHFSRAVVMPNLVPPITSVEQCIAYRQRILDAVPQGHAFTPLMTCYLTDALSVDTLMHGQREGVFTAAKLYPANATTNSACGVTSIPGLYPLFEAMQQSGMPLLIHGEVTQADIDIFDREARFIEQVMLPLRRDFPELRIVFEHITTREAAQFVAEGDRYLAATITPQHLMFNRNHMLVGGIHPHLYCLPILKRSVHQQALRKAATSGQTCFFLGTDSAPHLRGRKESACGCAGVFNAPTALQAYATVFEEEQALQHLEAFCSLNGPAFYGLPANEAYIELAQEPASVVDSIASGDETLTPFLAGETLRWSVRA.

2 residues coordinate Zn(2+): histidine 17 and histidine 19. Residues 19-21 (HLR) and asparagine 45 each bind substrate. The Zn(2+) site is built by lysine 103, histidine 140, and histidine 178. Lysine 103 bears the N6-carboxylysine mark. Histidine 140 lines the substrate pocket. Leucine 223 serves as a coordination point for substrate. Residue aspartate 251 coordinates Zn(2+). Aspartate 251 is an active-site residue. Substrate contacts are provided by histidine 255 and alanine 267.

It belongs to the metallo-dependent hydrolases superfamily. DHOase family. Class II DHOase subfamily. As to quaternary structure, homodimer. Zn(2+) is required as a cofactor.

It carries out the reaction (S)-dihydroorotate + H2O = N-carbamoyl-L-aspartate + H(+). Its pathway is pyrimidine metabolism; UMP biosynthesis via de novo pathway; (S)-dihydroorotate from bicarbonate: step 3/3. In terms of biological role, catalyzes the reversible cyclization of carbamoyl aspartate to dihydroorotate. In Edwardsiella ictaluri (strain 93-146), this protein is Dihydroorotase.